A 337-amino-acid chain; its full sequence is Probable cytosolic iron-sulfur protein assembly protein Ciao1 (337 aa).

WD repeat units lie at residues 12–51 (GHRG…RWVA), 58–97 (GHSR…FECN), 102–141 (GHEN…EYEC), 147–186 (THTQ…SDWS), 193–232 (SHES…NEFG), 251–290 (YHSR…SPHE), and 301–337 (AHSQ…EPEE).

It belongs to the WD repeat CIA1 family.

Its function is as follows. Essential component of the cytosolic iron-sulfur (Fe/S) protein assembly machinery. Required for the maturation of extramitochondrial Fe/S proteins. This is Probable cytosolic iron-sulfur protein assembly protein Ciao1 from Aedes aegypti (Yellowfever mosquito).